Consider the following 579-residue polypeptide: Capsid vertex component 2 (579 aa).

An interaction with major capsid protein/MCP region spans residues Met1–Asp50.

This sequence belongs to the herpesviridae CVC2 protein family. Heterodimerizes with CVC1. Interacts with major capsid protein/MCP and triplex capsid protein 1/TRX1 at the pentamer vertices. Interacts with the large tegument protein/LTP.

The protein localises to the virion. Its subcellular location is the host nucleus. Its function is as follows. Capsid vertex-specific component that plays a role during viral DNA encapsidation, assuring correct genome cleavage and presumably stabilizing capsids that contain full-length viral genomes. Participates in the interaction between the capsid and the tegument through interaction with the large tegument protein/LTP. This chain is Capsid vertex component 2, found in Homo sapiens (Human).